A 391-amino-acid chain; its full sequence is MPKTLHLAEQLIARPSLTPDDAGCQQIIAERLAPLGFSCETITSGPADFRVTNLWAKRAAAPVKSAQHTTKLVVFAGHTDIVPSGPVQQWRCHPFTPTQFDGKLYGRGAADMKTSLAAFVVAVEEFLTAQPDTALAIGFLLTSDEEGPALDGTVKVCEALQARGERIDYCIVGEPTSLERTGDMIKNGRRGTLSARLTVKGVQGHIAYPHLAKNPIHLVAPALAELVGVEWDRGNAFFPPTSWQISNIHSGTGASNVIPGAVVIDFNFRFSTESTPESLQTRLAAVLERHELDYELAWTLGGTPFLTEPGTLVDAVVDAIKQETGLTTVLSTTGGTSDGRFIARICPQVIEFGPPNASIHKIDEHINVADIEPLTNIYRRVLENLSAGLSA.

His-78 lines the Zn(2+) pocket. Residue Asp-80 is part of the active site. Residue Asp-111 participates in Zn(2+) binding. Catalysis depends on Glu-145, which acts as the Proton acceptor. Zn(2+) is bound by residues Glu-146, Glu-174, and His-360.

It belongs to the peptidase M20A family. DapE subfamily. In terms of assembly, homodimer. Zn(2+) is required as a cofactor. Co(2+) serves as cofactor.

The enzyme catalyses N-succinyl-(2S,6S)-2,6-diaminopimelate + H2O = (2S,6S)-2,6-diaminopimelate + succinate. The protein operates within amino-acid biosynthesis; L-lysine biosynthesis via DAP pathway; LL-2,6-diaminopimelate from (S)-tetrahydrodipicolinate (succinylase route): step 3/3. Catalyzes the hydrolysis of N-succinyl-L,L-diaminopimelic acid (SDAP), forming succinate and LL-2,6-diaminopimelate (DAP), an intermediate involved in the bacterial biosynthesis of lysine and meso-diaminopimelic acid, an essential component of bacterial cell walls. In Albidiferax ferrireducens (strain ATCC BAA-621 / DSM 15236 / T118) (Rhodoferax ferrireducens), this protein is Succinyl-diaminopimelate desuccinylase.